We begin with the raw amino-acid sequence, 134 residues long: ATP synthase epsilon chain (134 aa).

It belongs to the ATPase epsilon chain family. In terms of assembly, F-type ATPases have 2 components, CF(1) - the catalytic core - and CF(0) - the membrane proton channel. CF(1) has five subunits: alpha(3), beta(3), gamma(1), delta(1), epsilon(1). CF(0) has three main subunits: a, b and c. In this bacterium the a and b subunits are transcribed but do not seem to be translated, thus the ATP synthase consists of the alpha, beta, gamma, delta, epsilon and c subunits.

The protein resides in the cell membrane. Functionally, produces ATP from ADP in the presence of a proton gradient across the membrane. This chain is ATP synthase epsilon chain, found in Moorella thermoacetica (strain ATCC 39073 / JCM 9320).